The chain runs to 468 residues: Proline--tRNA ligase (468 aa).

Belongs to the class-II aminoacyl-tRNA synthetase family. ProS type 3 subfamily. In terms of assembly, homodimer.

It localises to the cytoplasm. The catalysed reaction is tRNA(Pro) + L-proline + ATP = L-prolyl-tRNA(Pro) + AMP + diphosphate. Its function is as follows. Catalyzes the attachment of proline to tRNA(Pro) in a two-step reaction: proline is first activated by ATP to form Pro-AMP and then transferred to the acceptor end of tRNA(Pro). In Frankia alni (strain DSM 45986 / CECT 9034 / ACN14a), this protein is Proline--tRNA ligase.